A 554-amino-acid chain; its full sequence is CTP synthase (554 aa).

Positions M1–L279 are amidoligase domain. Residue S21 coordinates CTP. S21 provides a ligand contact to UTP. Residues S22–L27 and D79 each bind ATP. Mg(2+) is bound by residues D79 and E153. CTP is bound by residues D160 to E162, K200 to Q205, and K236. Residues K200–Q205 and K236 each bind UTP. Residues T304–H553 enclose the Glutamine amidotransferase type-1 domain. An L-glutamine-binding site is contributed by G367. Residue C394 is the Nucleophile; for glutamine hydrolysis of the active site. Residues L395–Q398, E417, and R478 each bind L-glutamine. Residues H526 and E528 contribute to the active site.

The protein belongs to the CTP synthase family. In terms of assembly, homotetramer.

It carries out the reaction UTP + L-glutamine + ATP + H2O = CTP + L-glutamate + ADP + phosphate + 2 H(+). The catalysed reaction is L-glutamine + H2O = L-glutamate + NH4(+). It catalyses the reaction UTP + NH4(+) + ATP = CTP + ADP + phosphate + 2 H(+). Its pathway is pyrimidine metabolism; CTP biosynthesis via de novo pathway; CTP from UDP: step 2/2. With respect to regulation, allosterically activated by GTP, when glutamine is the substrate; GTP has no effect on the reaction when ammonia is the substrate. The allosteric effector GTP functions by stabilizing the protein conformation that binds the tetrahedral intermediate(s) formed during glutamine hydrolysis. Inhibited by the product CTP, via allosteric rather than competitive inhibition. In terms of biological role, catalyzes the ATP-dependent amination of UTP to CTP with either L-glutamine or ammonia as the source of nitrogen. Regulates intracellular CTP levels through interactions with the four ribonucleotide triphosphates. The protein is CTP synthase of Corynebacterium glutamicum (strain R).